The primary structure comprises 278 residues: Elongation factor Ts (278 aa).

The involved in Mg(2+) ion dislocation from EF-Tu stretch occupies residues Thr-80–Val-83.

The protein belongs to the EF-Ts family.

Its subcellular location is the cytoplasm. In terms of biological role, associates with the EF-Tu.GDP complex and induces the exchange of GDP to GTP. It remains bound to the aminoacyl-tRNA.EF-Tu.GTP complex up to the GTP hydrolysis stage on the ribosome. This chain is Elongation factor Ts, found in Pseudarthrobacter chlorophenolicus (strain ATCC 700700 / DSM 12829 / CIP 107037 / JCM 12360 / KCTC 9906 / NCIMB 13794 / A6) (Arthrobacter chlorophenolicus).